Here is a 347-residue protein sequence, read N- to C-terminus: UDP-3-O-acylglucosamine N-acyltransferase (347 aa).

His241 functions as the Proton acceptor in the catalytic mechanism.

This sequence belongs to the transferase hexapeptide repeat family. LpxD subfamily. Homotrimer.

The catalysed reaction is a UDP-3-O-[(3R)-3-hydroxyacyl]-alpha-D-glucosamine + a (3R)-hydroxyacyl-[ACP] = a UDP-2-N,3-O-bis[(3R)-3-hydroxyacyl]-alpha-D-glucosamine + holo-[ACP] + H(+). Its pathway is bacterial outer membrane biogenesis; LPS lipid A biosynthesis. Its function is as follows. Catalyzes the N-acylation of UDP-3-O-acylglucosamine using 3-hydroxyacyl-ACP as the acyl donor. Is involved in the biosynthesis of lipid A, a phosphorylated glycolipid that anchors the lipopolysaccharide to the outer membrane of the cell. This is UDP-3-O-acylglucosamine N-acyltransferase from Neisseria gonorrhoeae (strain NCCP11945).